The sequence spans 288 residues: Elongation factor Ts (288 aa).

Residues 80–83 (TDFV) are involved in Mg(2+) ion dislocation from EF-Tu.

The protein belongs to the EF-Ts family.

The protein resides in the cytoplasm. Functionally, associates with the EF-Tu.GDP complex and induces the exchange of GDP to GTP. It remains bound to the aminoacyl-tRNA.EF-Tu.GTP complex up to the GTP hydrolysis stage on the ribosome. The sequence is that of Elongation factor Ts from Chromobacterium violaceum (strain ATCC 12472 / DSM 30191 / JCM 1249 / CCUG 213 / NBRC 12614 / NCIMB 9131 / NCTC 9757 / MK).